A 301-amino-acid polypeptide reads, in one-letter code: UDP-N-acetylenolpyruvoylglucosamine reductase (301 aa).

An FAD-binding PCMH-type domain is found at 24–190 (RVGGLAQFYD…VSAQLQLQPG (167 aa)). Residue Arg-169 is part of the active site. Catalysis depends on Ser-220, which acts as the Proton donor. The active site involves Glu-290.

The protein belongs to the MurB family. It depends on FAD as a cofactor.

The protein localises to the cytoplasm. The catalysed reaction is UDP-N-acetyl-alpha-D-muramate + NADP(+) = UDP-N-acetyl-3-O-(1-carboxyvinyl)-alpha-D-glucosamine + NADPH + H(+). It participates in cell wall biogenesis; peptidoglycan biosynthesis. Its function is as follows. Cell wall formation. The chain is UDP-N-acetylenolpyruvoylglucosamine reductase from Synechococcus sp. (strain ATCC 27144 / PCC 6301 / SAUG 1402/1) (Anacystis nidulans).